Here is a 455-residue protein sequence, read N- to C-terminus: GTPase Der (455 aa).

EngA-type G domains lie at 4–169 and 178–353; these read PVVA…PPKS and IQLA…EQHR. Residues 10–17, 57–61, 120–123, 184–191, 231–235, and 296–299 contribute to the GTP site; these read GRPNVGKS, DTGGL, NKCE, DTAGI, and NKWD. One can recognise a KH-like domain in the interval 354-439; the sequence is RRVSTSVVNE…PLKLFWRGKQ (86 aa).

The protein belongs to the TRAFAC class TrmE-Era-EngA-EngB-Septin-like GTPase superfamily. EngA (Der) GTPase family. As to quaternary structure, associates with the 50S ribosomal subunit.

In terms of biological role, GTPase that plays an essential role in the late steps of ribosome biogenesis. The sequence is that of GTPase Der from Synechococcus sp. (strain WH7803).